Reading from the N-terminus, the 504-residue chain is Cystathionine beta-synthase (504 aa).

Residues Cys-12 and His-23 each contribute to the heme site. Lys-78 is subject to N6-(pyridoxal phosphate)lysine. Residues Asn-108, 215–219 (GTGGT), and Ser-307 contribute to the pyridoxal 5'-phosphate site. 2 CBS domains span residues 375-434 (LSFD…IVKC) and 442-498 (MVKQ…NGTS).

Belongs to the cysteine synthase/cystathionine beta-synthase family. In terms of assembly, homodimer. The cofactor is pyridoxal 5'-phosphate.

It carries out the reaction L-homocysteine + L-serine = L,L-cystathionine + H2O. The protein operates within amino-acid biosynthesis; L-cysteine biosynthesis; L-cysteine from L-homocysteine and L-serine: step 1/2. Its activity is regulated as follows. Has no response to S-adenosyl-methionine/AdoMet, unlike mammalian orthologs. Binds non-covalently to a heme group that may control the redox sensitivity of the enzyme. Hydro-lyase catalyzing the first step of the transsulfuration pathway, where the hydroxyl group of L-serine is displaced by L-homocysteine in a beta-replacement reaction to form L-cystathionine, the precursor of L-cysteine. The polypeptide is Cystathionine beta-synthase (Apis mellifera (Honeybee)).